Consider the following 230-residue polypeptide: Demethylmenaquinone methyltransferase (230 aa).

S-adenosyl-L-methionine contacts are provided by residues Thr62, Asp80, 100 to 101 (DA), and Ser117.

The protein belongs to the class I-like SAM-binding methyltransferase superfamily. MenG/UbiE family.

The catalysed reaction is a 2-demethylmenaquinol + S-adenosyl-L-methionine = a menaquinol + S-adenosyl-L-homocysteine + H(+). Its pathway is quinol/quinone metabolism; menaquinone biosynthesis; menaquinol from 1,4-dihydroxy-2-naphthoate: step 2/2. Functionally, methyltransferase required for the conversion of demethylmenaquinol (DMKH2) to menaquinol (MKH2). This chain is Demethylmenaquinone methyltransferase, found in Mycobacterium sp. (strain JLS).